A 102-amino-acid chain; its full sequence is RNA-binding protein Hfq (102 aa).

Residues 9–68 (DPFLNALRRERVPVSIYLVNGIKLQGQIESFDQFVILLKNTVSQMVYKHAISTVVPSRPV) enclose the Sm domain. Residues 63–102 (VPSRPVSHHSNNAGGGTSNNYHHGSNAQGSGAQQDSEETE) are disordered. Polar residues predominate over residues 70-96 (HHSNNAGGGTSNNYHHGSNAQGSGAQQ).

This sequence belongs to the Hfq family. As to quaternary structure, homohexamer.

Functionally, RNA chaperone that binds small regulatory RNA (sRNAs) and mRNAs to facilitate mRNA translational regulation in response to envelope stress, environmental stress and changes in metabolite concentrations. Also binds with high specificity to tRNAs. The polypeptide is RNA-binding protein Hfq (Salmonella arizonae (strain ATCC BAA-731 / CDC346-86 / RSK2980)).